The sequence spans 426 residues: Pannexin-1 (426 aa).

The Cytoplasmic portion of the chain corresponds to 1-40; sequence MAIAHLATEYVFSDFLLKEPTEPKFKGLRLELAVDKMVTC. An S-nitrosocysteine modification is found at cysteine 40. Residues 41–61 form a helical membrane-spanning segment; it reads IAVGLPLLLISLAFAQEISIG. The Extracellular segment spans residues 62–106; sequence TQISCFSPSSFSWRQAAFVDSYCWAAVQQKSSLQSESGNLPLWLH. 2 disulfide bridges follow: cysteine 66–cysteine 264 and cysteine 84–cysteine 245. Residues 107–127 form a helical membrane-spanning segment; that stretch reads KFFPYILLLFAILLYLPALFW. At 128–216 the chain is on the cytoplasmic side; that stretch reads RFSAAPHLCS…HLIMKYISCR (89 aa). Tyrosine 198 carries the post-translational modification Phosphotyrosine. Residues 217-237 form a helical membrane-spanning segment; it reads LVTFVVILLACIYLSYYFSLS. Residues 238-277 lie on the Extracellular side of the membrane; the sequence is SLSDEFLCSIKSGVLKNDSTIPDRFQCKLIAVGIFQLLSL. The N-linked (GlcNAc...) asparagine glycan is linked to asparagine 254. A helical transmembrane segment spans residues 278 to 298; sequence INLIVYALLIPVVVYTFFIPF. The Cytoplasmic portion of the chain corresponds to 299 to 426; sequence RQKTDILKVY…SRQRLLNPSC (128 aa). Cysteine 346 bears the S-nitrosocysteine mark.

Belongs to the pannexin family. Homoheptameric. In terms of processing, S-nitrosylation inhibits channel currents and ATP release. Post-translationally, N-glycosylation may play a role in cell surface targeting. Exists in three glycosylation states: non-glycosylated (GLY0), high-mannose glycosylated (GLY1), and fully mature glycosylated (GLY2). Phosphorylated at Tyr-198 by SRC. Phosphorylation activates ATP release. Constitutively phosphorylated in vascular smooth muscle cells. In terms of processing, cleaved by CASP3 and CASP7 during apoptosis. Cleavage opens the channel for the release of metabolites and induces plasma membrane permeability during apoptosis. As to expression, widely expressed, including in cartilage, skin, spleen and brain.

It localises to the cell membrane. It is found in the endoplasmic reticulum membrane. The catalysed reaction is chloride(in) = chloride(out). The enzyme catalyses iodide(out) = iodide(in). It catalyses the reaction Ca(2+)(in) = Ca(2+)(out). It carries out the reaction ATP(in) = ATP(out). The catalysed reaction is K(+)(in) = K(+)(out). The enzyme catalyses Na(+)(in) = Na(+)(out). It catalyses the reaction nitrate(in) = nitrate(out). It carries out the reaction L-aspartate(out) = L-aspartate(in). The catalysed reaction is L-glutamate(out) = L-glutamate(in). The enzyme catalyses D-gluconate(in) = D-gluconate(out). It catalyses the reaction spermidine(in) = spermidine(out). Ion channel involved in a variety of physiological functions such as blood pressure regulation, apoptotic cell clearance and oogenesis. Forms anion-selective channels with relatively low conductance and an order of permeabilities: nitrate&gt;iodide&gt;chlroride&gt;&gt;aspartate=glutamate=gluconate. Can release ATP upon activation through phosphorylation or cleavage at C-terminus. May play a role as a Ca(2+)-leak channel to regulate ER Ca(2+) homeostasis. Its function is as follows. During apoptosis and after cleavage by caspases of the C-terminal tail, acts as a plasma membrane channel which mediates the regulated release of find-me signals, such as nucleotides ATP and UTP, and selective plasme membrane permeability. The sequence is that of Pannexin-1 from Mus musculus (Mouse).